Consider the following 638-residue polypeptide: Lactose permease (638 aa).

Positions 1-470 (MHNHKVSGKQ…AQVIEELKSK (470 aa)) are permease. Transmembrane regions (helical) follow at residues 27–47 (FYGVMSTYFIIFITSGMFSGL), 56–76 (IGLITGLMVLVRIIELVIDPI), 94–114 (WILIGTVVSAALLLILFTGIF), 121–141 (WILFAILFVLIYIAFDVFYSL), 166–186 (LGAFSGIIGWNSLPIIVVPLV), 204–224 (WFAFAAVISALAIICALIVCF), 261–281 (LAYLLYSLAAVITNGVLFYMY), 291–311 (FWVVGIIATIIGCCINPSFPV), 320–340 (WLFIAGQTCMVLAYVLFIFGH), 343–363 (VFLMDLGLVLFNINFALLVTV), 395–415 (FAGAVSNALVGYVAIAAGMTG), and 429–449 (TFNMMALYIPLALAVLSIVVF). In terms of domain architecture, PTS EIIA type-1 spans 503–610 (SSVVDEDGKP…KDTIVIFYTQ (108 aa)). Residue His558 is modified to Phosphohistidine; by HPr.

It in the N-terminal section; belongs to the sodium:galactoside symporter (TC 2.A.2) family.

The protein resides in the cell membrane. Functionally, responsible for transport of beta-galactosides into the cell, with the concomitant uptake of protons (symport system), and also for transport of homologous and heterologous exchange of beta-galactosides. This chain is Lactose permease (lacS), found in Lactobacillus helveticus (Lactobacillus suntoryeus).